Consider the following 374-residue polypeptide: 5-hydroxytryptamine receptor 1D (374 aa).

Residues 1-35 (MSPPNQSLEGLPQEASNRSLNVTGAWDPEVLQALR) lie on the Extracellular side of the membrane. 3 N-linked (GlcNAc...) asparagine glycosylation sites follow: N5, N17, and N21. Residues 36-61 (ISLVVVLSVITLATVLSNAFVLTTIL) traverse the membrane as a helical segment. Residues 62–72 (LTKKLHTPANY) lie on the Cytoplasmic side of the membrane. A helical transmembrane segment spans residues 73–94 (LIGSLATTDLLVSILVMPISIA). Over 95-106 (YTTTRTWNFGQI) the chain is Extracellular. A helical transmembrane segment spans residues 107 to 131 (LCDIWVSSDITCCTASILHLCVIAL). A disulfide bridge links C108 with C185. Positions 115 and 119 each coordinate serotonin. The short motif at 132-134 (DRY) is the DRY motif; important for ligand-induced conformation changes element. Over 132–151 (DRYWAITDALEYSKRRTAGH) the chain is Cytoplasmic. A helical membrane pass occupies residues 152–173 (AAAMIAAVWIISICISIPPLFW). At 174 to 191 (RQATAHEEMSDCLVNTSQ) the chain is on the extracellular side. The helical transmembrane segment at 192–215 (ISYTIYSTCGAFYIPSILLIILYG) threads the bilayer. Over 216–297 (RIYVAARSRI…ISAARERKAT (82 aa)) the chain is Cytoplasmic. The helical transmembrane segment at 298-323 (KTLGIILGAFIICWLPFFVVSLVLPI) threads the bilayer. Position 318 (S318) interacts with serotonin. Topologically, residues 324–332 (CRDSCWIHP) are extracellular. A helical transmembrane segment spans residues 333 to 356 (ALFDFFTWLGYLNSLINPVIYTVF). The NPxxY motif; important for ligand-induced conformation changes and signaling signature appears at 349 to 353 (NPVIY). The Cytoplasmic segment spans residues 357–374 (NEDFRQAFQKVVHFRKIS).

Belongs to the G-protein coupled receptor 1 family. As to quaternary structure, homodimer. Heterodimer with HTR1B. As to expression, detected in the motor column in spinal cord, and in several cranial motor nuclei, including nucleus ambiguous, oculomotoris, trochelaris and abducens. Detected in gamma motor neurons in the lumbar spinal cord. Detected in proprioceptive sensory neurons in dorsal root ganglia.

It is found in the cell membrane. Its function is as follows. G-protein coupled receptor for 5-hydroxytryptamine (serotonin). Also functions as a receptor for ergot alkaloid derivatives, various anxiolytic and antidepressant drugs and other psychoactive substances. Ligand binding causes a conformation change that triggers signaling via guanine nucleotide-binding proteins (G proteins) and modulates the activity of downstream effectors, such as adenylate cyclase. HTR1D is coupled to G(i)/G(o) G alpha proteins and mediates inhibitory neurotransmission by inhibiting adenylate cyclase activity. Regulates the release of 5-hydroxytryptamine in the brain, and thereby affects neural activity. May also play a role in regulating the release of other neurotransmitters. May play a role in vasoconstriction. The chain is 5-hydroxytryptamine receptor 1D (Htr1d) from Mus musculus (Mouse).